Reading from the N-terminus, the 828-residue chain is Cadherin-22 (828 aa).

An N-terminal signal peptide occupies residues 1–34; that stretch reads MRPRPEGRGLRAGVALSPALLLLLLLPPPPTLLG. The Extracellular portion of the chain corresponds to 36-624; it reads LWAAGTPSPS…AFVMAASLSP (589 aa). Cadherin domains follow at residues 64–168, 169–277, 278–394, 395–498, and 499–616; these read WVWN…EPRF, LHGP…PPRF, PQKM…PPEF, RPPS…NPPE, and LATP…TTAF. An N-linked (GlcNAc...) asparagine glycan is attached at Asn-162. 2 N-linked (GlcNAc...) asparagine glycosylation sites follow: Asn-466 and Asn-612. Residues 625–645 traverse the membrane as a helical segment; sequence GALIALLVCVLILVVLVLLIL. The Cytoplasmic segment spans residues 646–828; it reads TLRRHHKSHL…HRGDDEAQAS (183 aa). The segment covering 702 to 719 has biased composition (gly residues); that stretch reads GGGSAGGGAGGGSGGGAG. The interval 702–745 is disordered; it reads GGGSAGGGAGGGSGGGAGSPPQAHLPSERHSLPQGPPSPEPDFS.

The protein localises to the cell membrane. Cadherins are calcium-dependent cell adhesion proteins. They preferentially interact with themselves in a homophilic manner in connecting cells; cadherins may thus contribute to the sorting of heterogeneous cell types. PB-cadherins may have a role in the morphological organization of pituitary gland and brain tissues. The chain is Cadherin-22 (CDH22) from Homo sapiens (Human).